Reading from the N-terminus, the 325-residue chain is Interleukin-10 receptor subunit beta (325 aa).

The N-terminal stretch at 1-19 is a signal peptide; sequence MAWSLGSWLGGCLLVSALG. Residues 20 to 220 lie on the Extracellular side of the membrane; sequence MVPPPENVRM…QTTHDETVPS (201 aa). Fibronectin type-III domains are found at residues 23–111 and 114–216; these read PPEN…VDDT and GPPG…THDE. N-linked (GlcNAc...) asparagine glycans are attached at residues asparagine 49, asparagine 68, asparagine 102, and asparagine 161. A disulfide bridge connects residues cysteine 66 and cysteine 74. An intrachain disulfide couples cysteine 188 to cysteine 209. Residues 221–242 traverse the membrane as a helical segment; that stretch reads WMVAVILMASVFMVCLALLGCF. Topologically, residues 243 to 325 are cytoplasmic; sequence ALLWCVYKKT…GTPPGQGPQS (83 aa). The tract at residues 301 to 325 is disordered; sequence DSESGKQNPGDSCSLGTPPGQGPQS. Residues 305-315 are compositionally biased toward polar residues; that stretch reads GKQNPGDSCSL.

The protein belongs to the type II cytokine receptor family. In terms of assembly, heterodimer with IFNLR1.

Its subcellular location is the membrane. Functionally, shared cell surface receptor required for the activation of five class 2 cytokines: IL10, IL22, IL26, IL28, and IFNL1. The IFNLR1/IL10RB dimer is a receptor for the cytokine ligands IFNL2 and IFNL3 and mediates their antiviral activity. The ligand/receptor complex stimulate the activation of the JAK/STAT signaling pathway leading to the expression of IFN-stimulated genes (ISG), which contribute to the antiviral state. The sequence is that of Interleukin-10 receptor subunit beta (IL10RB) from Homo sapiens (Human).